A 492-amino-acid chain; its full sequence is 6-phosphogluconate dehydrogenase, decarboxylating (492 aa).

NADP(+) is bound by residues 13–18, 36–38, 78–80, and N106; these read GLAVMG, NRT, and VKA. Substrate is bound at residue N106. A Phosphoserine modification is found at S107. 132–134 serves as a coordination point for substrate; the sequence is SGG. The Proton acceptor role is filled by K187. 190 to 191 contacts substrate; that stretch reads HN. The active-site Proton donor is E194. Y195 contributes to the substrate binding site. S215 is modified (phosphoserine). The substrate site is built by K264, R291, R449, and H455.

This sequence belongs to the 6-phosphogluconate dehydrogenase family. In terms of assembly, homodimer.

The enzyme catalyses 6-phospho-D-gluconate + NADP(+) = D-ribulose 5-phosphate + CO2 + NADPH. It functions in the pathway carbohydrate degradation; pentose phosphate pathway; D-ribulose 5-phosphate from D-glucose 6-phosphate (oxidative stage): step 3/3. Its function is as follows. Catalyzes the oxidative decarboxylation of 6-phosphogluconate to ribulose 5-phosphate and CO(2), with concomitant reduction of NADP to NADPH. The protein is 6-phosphogluconate dehydrogenase, decarboxylating of Schizosaccharomyces pombe (strain 972 / ATCC 24843) (Fission yeast).